We begin with the raw amino-acid sequence, 344 residues long: Probable nicotinate-nucleotide adenylyltransferase/Ap4A hydrolase (344 aa).

The tract at residues 1–182 is naMN adenylyltransferase; sequence MIFGGAFDPL…YIHQHNIYLK (182 aa). The segment at 191–344 is ap4A hydrolase; that stretch reads EPRMQHCLRV…LKYVRSLQKN (154 aa). Positions 193 to 304 constitute an HD domain; sequence RMQHCLRVGQ…IYLADKLEPM (112 aa). Residue His196 participates in ADP binding. Fe cation is bound by residues His196, His225, and Asp226. Residues 226-229, His255, 281-282, Asp299, and Arg305 contribute to the ADP site; these read DLAK and HT. Asp299 is a Fe cation binding site.

This sequence in the N-terminal section; belongs to the NadD family. The protein in the C-terminal section; belongs to the Ap4A hydrolase YqeK family.

It catalyses the reaction nicotinate beta-D-ribonucleotide + ATP + H(+) = deamido-NAD(+) + diphosphate. It carries out the reaction P(1),P(4)-bis(5'-adenosyl) tetraphosphate + H2O = 2 ADP + 2 H(+). It participates in cofactor biosynthesis; NAD(+) biosynthesis; deamido-NAD(+) from nicotinate D-ribonucleotide: step 1/1. Catalyzes the reversible adenylation of nicotinate mononucleotide (NaMN) to nicotinic acid adenine dinucleotide (NaAD). Its function is as follows. Hydrolyzes diadenosine 5',5'''-P1,P4-tetraphosphate (Ap4A) to yield ADP. The sequence is that of Probable nicotinate-nucleotide adenylyltransferase/Ap4A hydrolase from Mycoplasma pneumoniae (strain ATCC 29342 / M129 / Subtype 1) (Mycoplasmoides pneumoniae).